The chain runs to 562 residues: Adenylate kinase isoenzyme 5 (562 aa).

Adenylate kinase regions lie at residues 133-316 (KIIL…MAVD) and 377-559 (KIIF…TAID). ATP is bound at residue 142–147 (GSGKGT). An NMP 1 region spans residues 162-193 (SVGELLRKKIHSTSSNRKWSLIAKIITTGELA). AMP-binding positions include arginine 168, 191–193 (ELA), 219–222 (GFPR), and glutamine 226. An LID 1 region spans residues 256–266 (KRAEQQGRPDD). Residue arginine 257 participates in ATP binding. Positions 263 and 274 each coordinate AMP. 386-391 (GSGKGT) contributes to the ATP binding site. The segment at 406 to 435 (STDELLQNELSSESGRSKLIRDIMERGELV) is NMP 2. AMP contacts are provided by residues threonine 407, 433 to 435 (ELV), 462 to 465 (GYPR), and glutamine 469. The segment at 499 to 509 (QRSRNSPQADD) is LID 2. Arginine 500 provides a ligand contact to ATP. An AMP-binding site is contributed by arginine 517. Position 545 (glycine 545) interacts with ATP.

This sequence belongs to the adenylate kinase family. In terms of assembly, monomer.

It is found in the cytoplasm. It carries out the reaction AMP + ATP = 2 ADP. The catalysed reaction is a 2'-deoxyribonucleoside 5'-diphosphate + ATP = a 2'-deoxyribonucleoside 5'-triphosphate + ADP. The enzyme catalyses a ribonucleoside 5'-diphosphate + ATP = a ribonucleoside 5'-triphosphate + ADP. Its function is as follows. Nucleoside monophosphate (NMP) kinase that catalyzes the reversible transfer of the terminal phosphate group between nucleoside triphosphates and monophosphates. Active on AMP and dAMP with ATP as a donor. When GTP is used as phosphate donor, the enzyme phosphorylates AMP, CMP, and to a small extent dCMP. Also displays broad nucleoside diphosphate kinase activity. This is Adenylate kinase isoenzyme 5 (Ak5) from Bos taurus (Bovine).